The sequence spans 665 residues: UvrABC system protein B (665 aa).

The Helicase ATP-binding domain maps to 31–414; the sequence is DGVKGGEKAQ…EMEQTETVVQ (384 aa). 44–51 contributes to the ATP binding site; that stretch reads GATGTGKT. A Beta-hairpin motif is present at residues 97–120; it reads YYDYYQPEAYVPSSDTYIEKDSSI. Positions 435 to 601 constitute a Helicase C-terminal domain; sequence QIDDLVGEIH…TIIKEIRDLI (167 aa). The 36-residue stretch at 629–664 folds into the UVR domain; it reads ADLLMKLEREMKDAAKALDFETAATLRDTILELKAA.

Belongs to the UvrB family. As to quaternary structure, forms a heterotetramer with UvrA during the search for lesions. Interacts with UvrC in an incision complex.

Its subcellular location is the cytoplasm. The UvrABC repair system catalyzes the recognition and processing of DNA lesions. A damage recognition complex composed of 2 UvrA and 2 UvrB subunits scans DNA for abnormalities. Upon binding of the UvrA(2)B(2) complex to a putative damaged site, the DNA wraps around one UvrB monomer. DNA wrap is dependent on ATP binding by UvrB and probably causes local melting of the DNA helix, facilitating insertion of UvrB beta-hairpin between the DNA strands. Then UvrB probes one DNA strand for the presence of a lesion. If a lesion is found the UvrA subunits dissociate and the UvrB-DNA preincision complex is formed. This complex is subsequently bound by UvrC and the second UvrB is released. If no lesion is found, the DNA wraps around the other UvrB subunit that will check the other stand for damage. This Enterococcus faecalis (strain ATCC 700802 / V583) protein is UvrABC system protein B.